The following is a 240-amino-acid chain: LOB domain-containing protein 39 (240 aa).

Residues 1–107 (MSCNGCRVLR…VETVLRGGTL (107 aa)) form the LOB domain. Positions 200 to 233 (GDRPGSPSEESVTTSCWENGMRGDNKQKRNKGEK) are disordered. Over residues 207–216 (SEESVTTSCW) the composition is skewed to polar residues.

Belongs to the LOB domain-containing protein family. In terms of tissue distribution, expressed in young shoots, roots, stems, leaves and flowers.

This is LOB domain-containing protein 39 (LBD39) from Arabidopsis thaliana (Mouse-ear cress).